The primary structure comprises 182 residues: Interferon beta (182 aa).

The signal sequence occupies residues 1 to 21 (MNNRWILHAAFLLCFSTTALS). Residue Y24 is modified to Phosphotyrosine. N50, N90, and N97 each carry an N-linked (GlcNAc...) asparagine glycan.

Belongs to the alpha/beta interferon family. In terms of assembly, monomer. In terms of processing, this beta interferon does not have a disulfide bond.

It is found in the secreted. In terms of biological role, type I interferon cytokine that plays a key role in the innate immune response to infection, developing tumors and other inflammatory stimuli. Signals via binding to high-affinity (IFNAR2) and low-affinity (IFNAR1) heterodimeric receptor, activating the canonical Jak-STAT signaling pathway resulting in transcriptional activation or repression of interferon-regulated genes that encode the effectors of the interferon response, such as antiviral proteins, regulators of cell proliferation and differentiation, and immunoregulatory proteins. Signals mostly via binding to a IFNAR1-IFNAR2 heterodimeric receptor, but can also function with IFNAR1 alone and independently of Jak-STAT pathways. Elicits a wide variety of responses, including antiviral and antibacterial activities, and can regulate the development of B-cells, myelopoiesis and lipopolysaccharide (LPS)-inducible production of tumor necrosis factor. Plays a role in neuronal homeostasis by regulating dopamine turnover and protecting dopaminergic neurons: acts by promoting neuronal autophagy and alpha-synuclein clearance, thereby preventing dopaminergic neuron loss. IFNB1 is more potent than interferon-alpha (IFN-alpha) in inducing the apoptotic and antiproliferative pathways required for control of tumor cell growth. This chain is Interferon beta, found in Mus musculus (Mouse).